Consider the following 81-residue polypeptide: U-poneritoxin(01)-Om2a (81 aa).

Residues 1–25 (MKPSGITFAFLVVFMMAIMYNSVQA) form the signal peptide. A propeptide spanning residues 26-47 (AAIADADADAEAKAFADAFAEA) is cleaved from the precursor.

Belongs to the formicidae venom precursor-01 superfamily. In terms of processing, truncated sequences of this peptide have also been found in the venom. It is possible they have been cleaved in the venom. In terms of tissue distribution, expressed by the venom gland.

Its subcellular location is the secreted. Cationic amphipathic alpha-helical peptide with antimicrobial activities against E.coli (MIC=6.2 uM), S.aureus (MIC=6.2 uM), and S.cerevisiae (MIC=50 uM). Also shows histamine-releasing activity (30.1% at 10 uM) and a weak hemolytic activity (10.4% at 50 uM). This Odontomachus monticola (Trap-jaw ant) protein is U-poneritoxin(01)-Om2a.